The following is a 758-amino-acid chain: Long-chain-alcohol oxidase FAO1 (758 aa).

The next 2 membrane-spanning stretches (helical) occupy residues 102 to 122 (IVLR…LVCL) and 155 to 175 (PLAR…YFTW). 246–261 (CDAVVVGSGCGGGVAA) is an FAD binding site. The active-site Proton acceptor is the histidine 689.

The protein belongs to the GMC oxidoreductase family.

The protein localises to the membrane. The catalysed reaction is a long-chain primary fatty alcohol + O2 = a long-chain fatty aldehyde + H2O2. Functionally, long-chain fatty alcohol oxidase involved in the omega-oxidation pathway of lipid degradation. The sequence is that of Long-chain-alcohol oxidase FAO1 (FAO1) from Arabidopsis thaliana (Mouse-ear cress).